Reading from the N-terminus, the 522-residue chain is Sensory neuron membrane protein 1 (522 aa).

Residues 1-11 are Cytoplasmic-facing; it reads MQLAKPLKYAA. The helical transmembrane segment at 12-32 threads the bilayer; it reads ISGIVAFVGLMFGWVIFPAIL. The Extracellular portion of the chain corresponds to 33 to 458; that stretch reads KSQLKKEMAL…SQLFIPKRVV (426 aa). Residues N67, N105, and N229 are each glycosylated (N-linked (GlcNAc...) asparagine). 3 disulfide bridges follow: C268-C333, C297-C352, and C335-C341. Residue N440 is glycosylated (N-linked (GlcNAc...) asparagine). Residues 459-479 form a helical membrane-spanning segment; sequence SVVCWCMISFGSLGVIAAVIF. Residues 480–522 are Cytoplasmic-facing; it reads HFKGDIMHLAVAGDNSVSKIKPENDENKEVGVMGQNQEPAKVM. The disordered stretch occupies residues 500–522; it reads KPENDENKEVGVMGQNQEPAKVM. The segment covering 513–522 has biased composition (polar residues); it reads GQNQEPAKVM.

Belongs to the CD36 family. Principal component of the olfactory cilia membrane. Detected in both male and female antennae but not present in leg, abdomen, thorax or head.

Its subcellular location is the cell membrane. In terms of biological role, plays an olfactory role that is not restricted to pheromone sensitivity. The protein is Sensory neuron membrane protein 1 of Bombyx mori (Silk moth).